A 136-amino-acid chain; its full sequence is Histone H3.3 (136 aa).

The disordered stretch occupies residues 1 to 42; the sequence is MARTKQTARKSTGGKAPRKQLASKAARKSAPVSGGVKKPHRY. N6,N6,N6-trimethyllysine; alternate is present on K5. K5 bears the N6,N6-dimethyllysine; alternate mark. N6-methyllysine; alternate is present on residues K5 and K10. N6-acetyllysine; alternate is present on K10. The residue at position 11 (S11) is a Phosphoserine. K15 carries the post-translational modification N6,N6-dimethyllysine; alternate. N6-acetyllysine; alternate is present on residues K15, K19, K24, K28, and K37. N6-methyllysine; alternate is present on residues K19, K24, K28, and K37. 2 positions are modified to N6,N6,N6-trimethyllysine; alternate: K28 and K37. An N6,N6-dimethyllysine; alternate mark is found at K28 and K37. K57 and K65 each carry N6-acetyllysine. Residue K80 is modified to N6,N6,N6-trimethyllysine; alternate. Position 80 is an N6,N6-dimethyllysine; alternate (K80). An N6-methyllysine; alternate modification is found at K80.

This sequence belongs to the histone H3 family. In terms of assembly, the nucleosome is a histone octamer containing two molecules each of H2A, H2B, H3 and H4 assembled in one H3-H4 heterotetramer and two H2A-H2B heterodimers. The octamer wraps approximately 147 bp of DNA. Phosphorylated by IPL1 to form H3S10ph. H3S10ph promotes subsequent H3K14ac formation and is required for transcriptional activation through TBP recruitment to the promoters. Post-translationally, mono-, di- and trimethylated by the COMPASS complex to form H3K4me1/2/3. H3K4me activates gene expression by regulating transcription elongation and plays a role in telomere length maintenance. H3K4me enrichment correlates with transcription levels, and occurs in a 5' to 3' gradient with H3K4me3 enrichment at the 5'-end of genes, shifting to H3K4me2 and then H3K4me1. Methylated by SET2 to form H3K36me. H3K36me represses gene expression. Methylated by DOT1 to form H3K79me. H3K79me is required for association of SIR proteins with telomeric regions and for telomeric silencing. The COMPASS-mediated formation of H3K4me2/3 and the DOT1-mediated formation of H3K79me require H2BK123ub1. In terms of processing, acetylation of histone H3 leads to transcriptional activation. H3K14ac formation by GCN5 is promoted by H3S10ph. H3K14ac can also be formed by ESA1. H3K56ac formation occurs predominantly in newly synthesized H3 molecules during G1, S and G2/M of the cell cycle and may be involved in DNA repair.

The protein localises to the nucleus. It localises to the chromosome. Its function is as follows. Core component of nucleosome. Nucleosomes wrap and compact DNA into chromatin, limiting DNA accessibility to the cellular machineries which require DNA as a template. Histones thereby play a central role in transcription regulation, DNA repair, DNA replication and chromosomal stability. DNA accessibility is regulated via a complex set of post-translational modifications of histones, also called histone code, and nucleosome remodeling. This Candida albicans (strain SC5314 / ATCC MYA-2876) (Yeast) protein is Histone H3.3 (HHT3).